The following is a 349-amino-acid chain: tRNA pseudouridine synthase D (349 aa).

Phe27 lines the substrate pocket. The active-site Nucleophile is Asp80. A substrate-binding site is contributed by Asn129. The 149-residue stretch at 155–303 (GVPNYFGAQR…VEAARRAMLL (149 aa)) folds into the TRUD domain. Phe329 lines the substrate pocket.

The protein belongs to the pseudouridine synthase TruD family.

The enzyme catalyses uridine(13) in tRNA = pseudouridine(13) in tRNA. Responsible for synthesis of pseudouridine from uracil-13 in transfer RNAs. The chain is tRNA pseudouridine synthase D from Shigella dysenteriae serotype 1 (strain Sd197).